The chain runs to 457 residues: UDP-N-acetylmuramate--L-alanyl-gamma-D-glutamyl-meso-2,6-diaminoheptandioate ligase (457 aa).

110–116 contacts ATP; the sequence is GTHGKTT.

It belongs to the MurCDEF family. Mpl subfamily. Requires Mg(2+) as cofactor.

Its subcellular location is the secreted. It carries out the reaction UDP-N-acetyl-alpha-D-muramate + L-alanyl-gamma-D-glutamyl-meso-2,6-diaminopimelate + ATP = UDP-N-acetyl-alpha-D-muramoyl-L-alanyl-gamma-D-glutamyl-meso-2,6-diaminopimelate + ADP + phosphate + H(+). The protein operates within cell wall biogenesis; peptidoglycan recycling. Functionally, reutilizes the intact tripeptide L-alanyl-gamma-D-glutamyl-meso-diaminopimelate by linking it to UDP-N-acetylmuramate. The enzyme can also use the tetrapeptide L-alanyl-gamma-D-glutamyl-meso-2,6-diaminoheptanedioyl-D-alanine or the pentapeptide L-alanyl-gamma-D-glutamyl-meso-2,6-diaminoheptandioyl-D-alanyl-D-alanine in vivo and in vitro. The polypeptide is UDP-N-acetylmuramate--L-alanyl-gamma-D-glutamyl-meso-2,6-diaminoheptandioate ligase (Escherichia coli (strain K12)).